Consider the following 235-residue polypeptide: Small ribosomal subunit protein uS3 (235 aa).

Positions 39–107 (VRKFLNKELA…PAQINIAEVK (69 aa)) constitute a KH type-2 domain.

It belongs to the universal ribosomal protein uS3 family. As to quaternary structure, part of the 30S ribosomal subunit. Forms a tight complex with proteins S10 and S14.

Functionally, binds the lower part of the 30S subunit head. Binds mRNA in the 70S ribosome, positioning it for translation. In Mannheimia succiniciproducens (strain KCTC 0769BP / MBEL55E), this protein is Small ribosomal subunit protein uS3.